A 303-amino-acid polypeptide reads, in one-letter code: CDAN1-interacting nuclease 1 (303 aa).

It is found in the nucleus. Its subcellular location is the cytoplasm. In terms of biological role, may play a role in erythroid cell differentiation. This Xenopus laevis (African clawed frog) protein is CDAN1-interacting nuclease 1.